We begin with the raw amino-acid sequence, 148 residues long: Large ribosomal subunit protein uL15 (148 aa).

Residues 1–51 (MNLSNLKPAEGSTKTRKRIGRGPGSGLGGTSTRGHKGAKSRSGYKNKIGFE) form a disordered region. Over residues 21–31 (RGPGSGLGGTS) the composition is skewed to gly residues. A compositionally biased stretch (basic residues) spans 33 to 44 (RGHKGAKSRSGY).

The protein belongs to the universal ribosomal protein uL15 family. In terms of assembly, part of the 50S ribosomal subunit.

In terms of biological role, binds to the 23S rRNA. This Parabacteroides distasonis (strain ATCC 8503 / DSM 20701 / CIP 104284 / JCM 5825 / NCTC 11152) protein is Large ribosomal subunit protein uL15.